The primary structure comprises 315 residues: Eukaryotic translation initiation factor 2 subunit 1 (315 aa).

In terms of domain architecture, S1 motif spans 17–88 (EDVVMVNVRS…EKGYIDLSKR (72 aa)). Ser49 carries the phosphoserine; by HRI modification. The residue at position 52 (Ser52) is a Phosphoserine. Lys141 is modified (N6-acetyllysine). Ser158 carries the phosphoserine modification. Phosphothreonine is present on residues Thr279 and Thr281. Residues 293-315 (LERENAEVDGDDDAEEMEAKAED) are disordered. The span at 299-308 (EVDGDDDAEE) shows a compositional bias: acidic residues.

Belongs to the eIF-2-alpha family. Eukaryotic translation initiation factor 2 eIF2 is a heterotrimeric complex composed of an alpha (EIF2S1), a beta (EIF2S2) and a gamma (EIF2S3) chain. eIF2 is member of the 43S pre-initiation complex (43S PIC). eIF2 forms a complex with at least CELF1/CUGBP1, CALR, CALR3, EIF2S1, EIF2S2, HSP90B1 and HSPA5. Interaction with METAP2 protects EIF2S1 from inhibitory phosphorylation. Interacts with ABCF1 isoform 2. Associates with ribosomes. Interacts with DDX3X in an RNA-independent manner. Interacts with CDC123. As to quaternary structure, (Microbial infection) Interacts with rotavirus A non-structural protein 2; this interaction probably plays a role in the sequestration of IF2A in viral factories. Interacts with rotavirus A non-structural protein 5; this interaction probably plays a role in its sequestration in viral factories. Phosphorylation at Ser-49 and Ser-52 stabilizes the eIF-2/GDP/eIF2B complex and prevents GDP/GTP exchange reaction, thus impairing the recycling of eIF-2 between successive rounds of initiation and leading to global inhibition of translation, while concomitantly initiating the preferential translation of integrated stress response (ISR)-specific mRNAs. Substrate for at least 4 kinases: EIF2AK1/HRI, EIF2AK2/PKR, EIF2AK3/PERK and EIF2AK4/GCN2. Phosphorylation on Ser-52 by the EIF2AK4/GCN2 protein kinase occurs in response to amino acid starvation and UV irradiation. Phosphorylation at Ser-52 by the EIF2AK3/PERK protein kinase occurs in response to the unfolded protein response. Phosphorylation at Ser-52 by EIF2AK1/HRI in response to mitochondrial damage promotes relocalization to the mitochondrial surface. Post-translationally, (Microbial infection) Phosphorylation by vaccinia virus protein E3 and rotavirus A stabilizes the eIF-2/GDP/eIF2B complex and prevents GDP/GTP exchange reaction, thus impairing the recycling of eIF-2 between successive rounds of initiation and leading to global inhibition of translation.

It localises to the cytoplasm. The protein resides in the stress granule. Its subcellular location is the cytosol. It is found in the mitochondrion. Activity is regulated by phosphorylation at Ser-49 and Ser-52, which stabilizes the eIF2/GDP/eIF2B complex and prevents the eIF2B-mediated exchange of GDP for GTP, thereby preventing the formation of the 43S pre-initiation complex (43S PIC). This results in the global attenuation of 5' cap-dependent protein synthesis and concomitant translation of ISR-specific mRNAs that contain a short upstream open reading frame (uORF) in their 5' UTR, such as ATF4, ATF5, DDIT3/CHOP and PPP1R15A/GADD34. Functionally, member of the eIF2 complex that functions in the early steps of protein synthesis by forming a ternary complex with GTP and initiator tRNA. This complex binds to a 40S ribosomal subunit, followed by mRNA binding to form a 43S pre-initiation complex (43S PIC). Junction of the 60S ribosomal subunit to form the 80S initiation complex is preceded by hydrolysis of the GTP bound to eIF2 and release of an eIF2-GDP binary complex. In order for eIF2 to recycle and catalyze another round of initiation, the GDP bound to eIF2 must exchange with GTP by way of a reaction catalyzed by eIF2B. EIF2S1/eIF2-alpha is a key component of the integrated stress response (ISR), required for adaptation to various stress: phosphorylation by metabolic-stress sensing protein kinases (EIF2AK1/HRI, EIF2AK2/PKR, EIF2AK3/PERK and EIF2AK4/GCN2) in response to stress converts EIF2S1/eIF2-alpha in a global protein synthesis inhibitor, leading to an attenuation of cap-dependent translation, while concomitantly initiating the preferential translation of ISR-specific mRNAs, such as the transcriptional activators ATF4 and QRICH1, and hence allowing ATF4- and QRICH1-mediated reprogramming. EIF2S1/eIF2-alpha also acts as an activator of mitophagy in response to mitochondrial damage: phosphorylation by EIF2AK1/HRI promotes relocalization to the mitochondrial surface, thereby triggering PRKN-independent mitophagy. This is Eukaryotic translation initiation factor 2 subunit 1 from Homo sapiens (Human).